The chain runs to 369 residues: Methionine import ATP-binding protein MetN 1 (369 aa).

The ABC transporter domain maps to 29–265 (IRLHGLGKRY…PRHAVTRSLL (237 aa)). Position 62–69 (62–69 (GRSGAGKS)) interacts with ATP.

The protein belongs to the ABC transporter superfamily. Methionine importer (TC 3.A.1.24) family. The complex is composed of two ATP-binding proteins (MetN), two transmembrane proteins (MetI) and a solute-binding protein (MetQ).

The protein resides in the cell inner membrane. The catalysed reaction is L-methionine(out) + ATP + H2O = L-methionine(in) + ADP + phosphate + H(+). It carries out the reaction D-methionine(out) + ATP + H2O = D-methionine(in) + ADP + phosphate + H(+). In terms of biological role, part of the ABC transporter complex MetNIQ involved in methionine import. Responsible for energy coupling to the transport system. The sequence is that of Methionine import ATP-binding protein MetN 1 from Pseudomonas aeruginosa (strain ATCC 15692 / DSM 22644 / CIP 104116 / JCM 14847 / LMG 12228 / 1C / PRS 101 / PAO1).